The following is a 335-amino-acid chain: Glucokinase (335 aa).

Residue 11–16 participates in ATP binding; it reads ADIGGT.

Belongs to the bacterial glucokinase family.

Its subcellular location is the cytoplasm. It catalyses the reaction D-glucose + ATP = D-glucose 6-phosphate + ADP + H(+). In Xanthomonas oryzae pv. oryzae (strain MAFF 311018), this protein is Glucokinase.